The chain runs to 506 residues: ATP synthase subunit alpha, chloroplastic (506 aa).

ATP is bound at residue 170 to 177 (GDRQTGKT).

Belongs to the ATPase alpha/beta chains family. F-type ATPases have 2 components, CF(1) - the catalytic core - and CF(0) - the membrane proton channel. CF(1) has five subunits: alpha(3), beta(3), gamma(1), delta(1), epsilon(1). CF(0) has four main subunits: a, b, b' and c.

Its subcellular location is the plastid. It localises to the chloroplast thylakoid membrane. It carries out the reaction ATP + H2O + 4 H(+)(in) = ADP + phosphate + 5 H(+)(out). Functionally, produces ATP from ADP in the presence of a proton gradient across the membrane. The alpha chain is a regulatory subunit. The sequence is that of ATP synthase subunit alpha, chloroplastic from Euglena gracilis.